A 294-amino-acid polypeptide reads, in one-letter code: Small ribosomal subunit protein uS2 (294 aa).

This sequence belongs to the universal ribosomal protein uS2 family.

This Mycoplasma pneumoniae (strain ATCC 29342 / M129 / Subtype 1) (Mycoplasmoides pneumoniae) protein is Small ribosomal subunit protein uS2 (rpsB).